The primary structure comprises 559 residues: D-2-hydroxyglutarate dehydrogenase, mitochondrial (559 aa).

The N-terminal 78 residues, 1-78 (MMMQKLRRSG…GMLLQQYKCF (78 aa)), are a transit peptide targeting the mitochondrion. One can recognise an FAD-binding PCMH-type domain in the interval 130-309 (YKGSSKLMLL…TKVSILTQPK (180 aa)).

This sequence belongs to the FAD-binding oxidoreductase/transferase type 4 family. In terms of assembly, homodimer. The cofactor is FAD.

It is found in the mitochondrion. It carries out the reaction (R)-2-hydroxyglutarate + A = 2-oxoglutarate + AH2. In terms of biological role, catalyzes the oxidation of (R)-2-hydroxyglutarate to 2-oxoglutarate. May be involved in the catabolism of propionyl-CoA derived from beta-oxidation. Involved in degradation of lysine for the supply of carbon and electrons to the ETF/ETFQO complex during dark-induced sugar starvation. The polypeptide is D-2-hydroxyglutarate dehydrogenase, mitochondrial (D2HGDH) (Arabidopsis thaliana (Mouse-ear cress)).